Reading from the N-terminus, the 312-residue chain is Sulfate adenylyltransferase subunit 2 (312 aa).

The protein belongs to the PAPS reductase family. CysD subfamily. As to quaternary structure, heterodimer composed of CysD, the smaller subunit, and CysN.

The enzyme catalyses sulfate + ATP + H(+) = adenosine 5'-phosphosulfate + diphosphate. It functions in the pathway sulfur metabolism; hydrogen sulfide biosynthesis; sulfite from sulfate: step 1/3. Its function is as follows. With CysN forms the ATP sulfurylase (ATPS) that catalyzes the adenylation of sulfate producing adenosine 5'-phosphosulfate (APS) and diphosphate, the first enzymatic step in sulfur assimilation pathway. APS synthesis involves the formation of a high-energy phosphoric-sulfuric acid anhydride bond driven by GTP hydrolysis by CysN coupled to ATP hydrolysis by CysD. In Methylobacterium nodulans (strain LMG 21967 / CNCM I-2342 / ORS 2060), this protein is Sulfate adenylyltransferase subunit 2.